A 381-amino-acid chain; its full sequence is N-acetyldiaminopimelate deacetylase (381 aa).

The active site involves D71. E130 (proton acceptor) is an active-site residue.

The protein belongs to the peptidase M20A family. N-acetyldiaminopimelate deacetylase subfamily.

It catalyses the reaction N-acetyl-(2S,6S)-2,6-diaminopimelate + H2O = (2S,6S)-2,6-diaminopimelate + acetate. It participates in amino-acid biosynthesis; L-lysine biosynthesis via DAP pathway; LL-2,6-diaminopimelate from (S)-tetrahydrodipicolinate (acetylase route): step 3/3. Its function is as follows. Catalyzes the conversion of N-acetyl-diaminopimelate to diaminopimelate and acetate. The chain is N-acetyldiaminopimelate deacetylase from Ligilactobacillus salivarius (strain UCC118) (Lactobacillus salivarius).